Here is a 410-residue protein sequence, read N- to C-terminus: Lipid droplet-regulating VLDL assembly factor AUP1 (410 aa).

Methionine 1 carries the post-translational modification N-acetylmethionine. Residues 1 to 20 (MEPPPAPGPERLFDSHRLPS) are Cytoplasmic-facing. Residues 21–41 (DGFLLLALLLYAPVGLCLLVL) lie within the membrane without spanning it. Residues 42–410 (RLFLGLHVFL…FRERQAQEAE (369 aa)) are Cytoplasmic-facing. The tract at residues 258 to 295 (RLTPADKAEHMKRQRHPRLRPQSVQSSFPSPPSPSSDV) is disordered. Serine 292 carries the post-translational modification Phosphoserine. Residues 296-338 (QLTTLAHRVKEVLPHVPLNVIQRDLARTGCVDLTITNLLEGAV) form the CUE domain. Residues 344–369 (DVTEGSQSPPAPSAPKFPSSGLATPQ) are disordered. Position 363 is a phosphoserine (serine 363). Phosphothreonine is present on threonine 367.

The protein belongs to the AUP1 family. As to quaternary structure, identified in a complex that contains SEL1L, OS9, FAF2/UBXD8, UBE2J1/UBC6E and AUP1. Interacts with the cytoplasmic tail of ITGA2B, ITGA1, ITGA2, ITGA5, ITGAV and ITGAM. Interacts (via C-terminus) with UBE2G2; the interaction recruits UBE2G2 to lipid droplets. Interacts with ubiquitin ligases AMFR/gp78 and RNF139/TRC8; this promotes interaction of UBE2G2 with AMFR and RNF139. Interacts with apolipoprotein APOB. Post-translationally, monoubiquitinated and diubiquitinated. In terms of tissue distribution, ubiquitous.

The protein resides in the endoplasmic reticulum membrane. The protein localises to the lipid droplet. Its function is as follows. Plays a role in the translocation of terminally misfolded proteins from the endoplasmic reticulum lumen to the cytoplasm and their degradation by the proteasome. Plays a role in lipid droplet formation. Induces lipid droplet clustering. Recruits ubiquitin-conjugating enzyme UBE2G2 to lipid droplets which facilitates its interaction with ubiquitin ligases AMFR/gp78 and RNF139/TRC8, leading to sterol-induced ubiquitination of HMGCR and its subsequent proteasomal degradation. Also required for the degradation of INSIG1, SREBF1 and SREBF2. Plays a role in regulating assembly and secretion of very low density lipoprotein particles and stability of apolipoprotein APOB. In Mus musculus (Mouse), this protein is Lipid droplet-regulating VLDL assembly factor AUP1.